The primary structure comprises 1207 residues: MAFMFTEHLLFLTLMMCSFSTCEESVSNYSEWAVFTDDIQWLKSQKIQDFKLNRRLHPNLYFDAGDIQTLKQKSRTSHLHIFRAIKSAVTIMLSNPSYYLPPPKHAEFAAKWNEIYGNNLPPLALYCLLCPEDKVAFEFVMEYMDRMVSYKDWLVENAPGDEVPVGHSLTGFATAFDFLYNLLGNQRKQKYLEKIWIVTEEMYEYSKIRSWGKQLLHNHQATNMIALLIGALVTGVDKGSKANIWKQVVVDVMEKTMFLLKHIVDGSLDEGVAYGSYTSKSVTQYVFLAQRHFNINNFDNNWLKMHFWFYYATLLPGYQRTVGIADSNYNWFYGPESQLVFLDKFILQNGAGNWLAQQIRKHRPKDGPMVPSTAQRWSTLHTEYIWYDPTLTPQPPVDFGTAKMHTFPNWGVVTYGGGLPNTQTNTFVSFKSGKLGGRAVYDIVHFQPYSWIDGWRSFNPGHEHPDQNSFTFAPNGQVFVSEALYGPKLSHLNNVLVFAPSPSSQCNQPWEGQLGECAQWLKWTGEEVGDAAGEVITAAQHGDRMFVSGEAVSAYSSAMRLKSVYRALLLLNSQTLLVVDHIERQETSPINSVSAFFHNLDIDFKYIPYKFMNRYNGAMMDVWDAHYKMFWFDHHGNSPVANIQEAEQAAEFKKRWTQFVNVTFHMESTITRIAYVFYGPYVNVSSCRFIDSSSSGLQISLHVNSTEHSVSVVTDYQNLKSRFSYLGFGGFASVANQGQITRFGLGTQEIVNPVRHDKVNFPFGFKFNIAVGFILCISLVILTFQWRFYLSFRKLMRCVLILVIALWFIELLDVWSTCTQPICAKWTRTEAKANEKVMISEGHHVDLPNVIITSLPGSGAEILKQLFFNSSDFLYIRIPTAYMDIPETEFEIDSFVDACEWKVSDIRSGHFHLLRGWLQSLVQDTKLHLQNIHLHETSRSKLAQYFTTNKDKKRKLKRRESLQDQRSRIKGPFDRDAEYIRALRRHLVYYPSARPVLSLSSGSWTLKLHFFQEVLGTSMRALYIVRDPRAWIYSVLYGSKPSLYSLKNVPEHLAKLFKIEEGKSKCNSNSGYAFEYESLKKELEISQSNAISLLSHLWVANTAAALRINTDLLPTNYHLVKFEDIVHFPQKTTERIFAFLGIPLSPASLNQMLFATSTNLFYLPYEGEISPSNTNIWKTNLPRDEIKLIENICWTLMDHLGYPKFMD.

Residues 1-22 form the signal peptide; sequence MAFMFTEHLLFLTLMMCSFSTC. N-linked (GlcNAc...) asparagine glycosylation is found at N28, N661, N683, and N704. The next 2 membrane-spanning stretches (helical) occupy residues 761 to 781 and 798 to 818; these read FPFG…SLVI and CVLI…WSTC. N869 carries N-linked (GlcNAc...) asparagine glycosylation.

This sequence belongs to the dermatan-sulfate isomerase family.

It is found in the membrane. This chain is Dermatan-sulfate epimerase-like protein (Dsel), found in Mus musculus (Mouse).